A 170-amino-acid polypeptide reads, in one-letter code: Xanthine-guanine phosphoribosyltransferase (170 aa).

5-phospho-alpha-D-ribose 1-diphosphate is bound by residues 41–42 (RG) and 98–106 (DDLTDTGKT). Residue D99 participates in Mg(2+) binding. D102 contributes to the guanine binding site. D102 is a xanthine binding site. 102 to 106 (DTGKT) provides a ligand contact to GMP.

This sequence belongs to the purine/pyrimidine phosphoribosyltransferase family. XGPT subfamily. In terms of assembly, homotetramer. It depends on Mg(2+) as a cofactor.

The protein localises to the cell inner membrane. The enzyme catalyses GMP + diphosphate = guanine + 5-phospho-alpha-D-ribose 1-diphosphate. It catalyses the reaction XMP + diphosphate = xanthine + 5-phospho-alpha-D-ribose 1-diphosphate. The catalysed reaction is IMP + diphosphate = hypoxanthine + 5-phospho-alpha-D-ribose 1-diphosphate. Its pathway is purine metabolism; GMP biosynthesis via salvage pathway; GMP from guanine: step 1/1. It functions in the pathway purine metabolism; XMP biosynthesis via salvage pathway; XMP from xanthine: step 1/1. In terms of biological role, purine salvage pathway enzyme that catalyzes the transfer of the ribosyl-5-phosphate group from 5-phospho-alpha-D-ribose 1-diphosphate (PRPP) to the N9 position of the 6-oxopurines guanine and xanthine to form the corresponding ribonucleotides GMP (guanosine 5'-monophosphate) and XMP (xanthosine 5'-monophosphate), with the release of PPi. To a lesser extent, also acts on hypoxanthine. The chain is Xanthine-guanine phosphoribosyltransferase from Brucella abortus (strain 2308).